Consider the following 178-residue polypeptide: ATP synthase subunit delta (178 aa).

This sequence belongs to the ATPase delta chain family. F-type ATPases have 2 components, F(1) - the catalytic core - and F(0) - the membrane proton channel. F(1) has five subunits: alpha(3), beta(3), gamma(1), delta(1), epsilon(1). F(0) has three main subunits: a(1), b(2) and c(10-14). The alpha and beta chains form an alternating ring which encloses part of the gamma chain. F(1) is attached to F(0) by a central stalk formed by the gamma and epsilon chains, while a peripheral stalk is formed by the delta and b chains.

The protein localises to the cell inner membrane. Its function is as follows. F(1)F(0) ATP synthase produces ATP from ADP in the presence of a proton or sodium gradient. F-type ATPases consist of two structural domains, F(1) containing the extramembraneous catalytic core and F(0) containing the membrane proton channel, linked together by a central stalk and a peripheral stalk. During catalysis, ATP synthesis in the catalytic domain of F(1) is coupled via a rotary mechanism of the central stalk subunits to proton translocation. This protein is part of the stalk that links CF(0) to CF(1). It either transmits conformational changes from CF(0) to CF(1) or is implicated in proton conduction. This is ATP synthase subunit delta from Pelodictyon phaeoclathratiforme (strain DSM 5477 / BU-1).